The chain runs to 669 residues: Dymeclin (669 aa).

G2 carries N-myristoyl glycine lipidation.

Belongs to the dymeclin family. In terms of processing, myristoylated in vitro; myristoylation is not essential for protein targeting to Golgi compartment.

The protein resides in the cytoplasm. It is found in the golgi apparatus. In terms of biological role, necessary for correct organization of Golgi apparatus. The chain is Dymeclin (dym) from Xenopus laevis (African clawed frog).